We begin with the raw amino-acid sequence, 199 residues long: Carbon disulfide hydrolase (199 aa).

Residues Cys-36, His-91, and Cys-94 each contribute to the Zn(2+) site.

Belongs to the beta-class carbonic anhydrase family. In terms of assembly, exists as both octamers and hexadecamers in solution. The hexadecameric homooligomer may form a catenane, through interactions of two interlocked octameric rings. Requires Zn(2+) as cofactor.

The enzyme catalyses carbon disulfide + 2 H2O = 2 hydrogen sulfide + CO2 + 2 H(+). It participates in sulfur metabolism; hydrogen sulfide biosynthesis. In terms of biological role, catalyzes the conversion of carbon disulfide into hydrogen sulfide and carbon dioxide, with carbonyl sulfide as an intermediate. Likely plays a key role in sulfur metabolism that allows A.thiooxidans G8 to grow on carbon disulfide as the main carbon and energy source. Does not show carbonic anhydrase activity (hydration of CO(2) to carbonate). This Acidithiobacillus thiooxidans (Thiobacillus thiooxidans) protein is Carbon disulfide hydrolase.